A 93-amino-acid chain; its full sequence is Large ribosomal subunit protein uL23cz/uL23cy (93 aa).

Belongs to the universal ribosomal protein uL23 family. Part of the 50S ribosomal subunit.

Its subcellular location is the plastid. The protein localises to the chloroplast. Functionally, binds to 23S rRNA. This Gossypium barbadense (Sea Island cotton) protein is Large ribosomal subunit protein uL23cz/uL23cy (rpl23-A).